A 283-amino-acid polypeptide reads, in one-letter code: NAD kinase (283 aa).

The Proton acceptor role is filled by Asp-67. NAD(+)-binding positions include 67–68 (DG), Arg-72, 136–137 (NE), Lys-147, Arg-164, Asp-166, 177–182 (TAYSMS), and Gln-236.

Belongs to the NAD kinase family. A divalent metal cation is required as a cofactor.

The protein localises to the cytoplasm. It catalyses the reaction NAD(+) + ATP = ADP + NADP(+) + H(+). Functionally, involved in the regulation of the intracellular balance of NAD and NADP, and is a key enzyme in the biosynthesis of NADP. Catalyzes specifically the phosphorylation on 2'-hydroxyl of the adenosine moiety of NAD to yield NADP. The sequence is that of NAD kinase from Methanothermobacter thermautotrophicus (strain ATCC 29096 / DSM 1053 / JCM 10044 / NBRC 100330 / Delta H) (Methanobacterium thermoautotrophicum).